Here is a 41-residue protein sequence, read N- to C-terminus: Photosystem II reaction center protein Y (41 aa).

An N-formylmethionine modification is found at Met-1. Over 1-4 (MDWR) the chain is Lumenal. A helical membrane pass occupies residues 5–23 (VLVVLLPVLLAAGWAVRNI). At 24–41 (LPYAVKQVQKLLQKAKAA) the chain is on the cytoplasmic side.

This sequence belongs to the PsbY family. As to quaternary structure, PSII is composed of 1 copy each of membrane proteins PsbA, PsbB, PsbC, PsbD, PsbE, PsbF, PsbH, PsbI, PsbJ, PsbK, PsbL, PsbM, PsbT, PsbX, PsbY, PsbZ, Psb30/Ycf12, peripheral proteins PsbO, CyanoQ (PsbQ), PsbU, PsbV and a large number of cofactors. It forms dimeric complexes. This protein is only loosely associated with PSII, and is not often found in crystals. Found on the exterior of the PSII dimer, near cytochrome b559 (psbE and psbF). PSII binds multiple chlorophylls, carotenoids and specific lipids. serves as cofactor.

The protein resides in the cellular thylakoid membrane. In terms of biological role, loosely associated component of the core of photosystem II, it is not always seen in crystals. PSII is a light-driven water plastoquinone oxidoreductase, using light energy to abstract electrons from H(2)O, generating a proton gradient subsequently used for ATP formation. The protein is Photosystem II reaction center protein Y of Thermosynechococcus vestitus (strain NIES-2133 / IAM M-273 / BP-1).